The primary structure comprises 90 residues: Sec-independent protein translocase protein TatA (90 aa).

The helical transmembrane segment at 2-22 (GVGGISIWQLLIVLVIILLLF) threads the bilayer. Composition is skewed to basic and acidic residues over residues 45-68 (LRDE…HKAE) and 76-90 (ADAD…DEHK). The interval 45 to 90 (LRDEERRDAEEAATIEHKQAHKAENPSQRQQADADFKIKSGNDEHK) is disordered.

Belongs to the TatA/E family. As to quaternary structure, the Tat system comprises two distinct complexes: a TatABC complex, containing multiple copies of TatA, TatB and TatC subunits, and a separate TatA complex, containing only TatA subunits. Substrates initially bind to the TatABC complex, which probably triggers association of the separate TatA complex to form the active translocon.

The protein resides in the cell inner membrane. In terms of biological role, part of the twin-arginine translocation (Tat) system that transports large folded proteins containing a characteristic twin-arginine motif in their signal peptide across membranes. TatA could form the protein-conducting channel of the Tat system. In Nitrosococcus oceani (strain ATCC 19707 / BCRC 17464 / JCM 30415 / NCIMB 11848 / C-107), this protein is Sec-independent protein translocase protein TatA.